We begin with the raw amino-acid sequence, 524 residues long: Serine/threonine-protein phosphatase 2A 56 kDa regulatory subunit gamma isoform (524 aa).

M1 is modified (N-acetylmethionine). The disordered stretch occupies residues S476–A508.

This sequence belongs to the phosphatase 2A regulatory subunit B56 family. PP2A consists of a common heterodimeric core enzyme, composed of PPP2CA a 36 kDa catalytic subunit (subunit C) and PPP2R1A a 65 kDa constant regulatory subunit (PR65 or subunit A), that associates with a variety of regulatory subunits. Proteins that associate with the core dimer include three families of regulatory subunits B (the R2/B/PR55/B55, R3/B''/PR72/PR130/PR59 and R5/B'/B56 families), the 48 kDa variable regulatory subunit, viral proteins, and cell signaling molecules. Interacts with SGO1. Interacts with SGO1; the interaction is direct. May interact with TP53. Interacts with IER3 and/or ERK kinases; regulates ERK dephosphorylation. Interacts with CIP2A; this interaction stabilizes CIP2A. As to expression, highest levels in heart, liver and brain. Lower levels in skeletal muscle, spleen, kidney and lung. Isoform 4 is testis-specific.

The protein resides in the nucleus. Its subcellular location is the chromosome. It is found in the centromere. In terms of biological role, the B regulatory subunit might modulate substrate selectivity and catalytic activity, and might also direct the localization of the catalytic enzyme to a particular subcellular compartment. The PP2A-PPP2R5C holoenzyme may activate TP53 and play a role in DNA damage-induced inhibition of cell proliferation. PP2A-PPP2R5C may also regulate the ERK signaling pathway through ERK dephosphorylation. The chain is Serine/threonine-protein phosphatase 2A 56 kDa regulatory subunit gamma isoform (Ppp2r5c) from Mus musculus (Mouse).